The following is a 182-amino-acid chain: MTRTAIEIPENVSAEVSNLALTVEGPNGSVTRTLWYPSVTVSVDEDADADAVVIETDETDAKTSATVGTFESHVSNMIHGVTDGWSYEMEVYYAHFPMQVSVEGDEVIIENFLGEKASRRTPIRGDTNVQIDGEMVTLTGPSKEDVGQTAADIEQLTRVTDKDTRIFQDGVYITQKPQQGGA.

It belongs to the universal ribosomal protein uL6 family. In terms of assembly, part of the 50S ribosomal subunit.

Its function is as follows. This protein binds to the 23S rRNA, and is important in its secondary structure. It is located near the subunit interface in the base of the L7/L12 stalk, and near the tRNA binding site of the peptidyltransferase center. The chain is Large ribosomal subunit protein uL6 from Haloquadratum walsbyi (strain DSM 16790 / HBSQ001).